The chain runs to 264 residues: Acyl-[acyl-carrier-protein]--UDP-N-acetylglucosamine O-acyltransferase (264 aa).

It belongs to the transferase hexapeptide repeat family. LpxA subfamily. As to quaternary structure, homotrimer.

The protein localises to the cytoplasm. The enzyme catalyses a (3R)-hydroxyacyl-[ACP] + UDP-N-acetyl-alpha-D-glucosamine = a UDP-3-O-[(3R)-3-hydroxyacyl]-N-acetyl-alpha-D-glucosamine + holo-[ACP]. It functions in the pathway glycolipid biosynthesis; lipid IV(A) biosynthesis; lipid IV(A) from (3R)-3-hydroxytetradecanoyl-[acyl-carrier-protein] and UDP-N-acetyl-alpha-D-glucosamine: step 1/6. Involved in the biosynthesis of lipid A, a phosphorylated glycolipid that anchors the lipopolysaccharide to the outer membrane of the cell. In Rickettsia conorii (strain ATCC VR-613 / Malish 7), this protein is Acyl-[acyl-carrier-protein]--UDP-N-acetylglucosamine O-acyltransferase.